We begin with the raw amino-acid sequence, 119 residues long: Hydrogenase maturation factor HypA (119 aa).

His-2 is a Ni(2+) binding site. Zn(2+) contacts are provided by Cys-73, Cys-76, Cys-89, and Cys-92.

Belongs to the HypA/HybF family.

Its function is as follows. Involved in the maturation of [NiFe] hydrogenases. Required for nickel insertion into the metal center of the hydrogenase. The sequence is that of Hydrogenase maturation factor HypA from Dehalococcoides mccartyi (strain ATCC BAA-2266 / KCTC 15142 / 195) (Dehalococcoides ethenogenes (strain 195)).